Consider the following 147-residue polypeptide: MVISIRRSRHEEGEELVAIWCRSVDATHDFLSAEYRTELEDLVRSFLPEAPLWVAVNERDQPVGFMLLSGQHMDALFIDPDVRGCGVGRVLVEHALSMAPELTTNVNEQNEQAVGFYKKVGFKVTGRSEVDDLGKPYPLLNLAYVGA.

Positions 3 to 144 (ISIRRSRHEE…KPYPLLNLAY (142 aa)) constitute an N-acetyltransferase domain.

Belongs to the acetyltransferase family.

It catalyses the reaction L-lysyl-[protein] + acetyl-CoA = N(6)-acetyl-L-lysyl-[protein] + CoA + H(+). Functionally, N-epsilon-lysine acetyltransferase that catalyzes acetylation of a large number of proteins. Binds acetyl-CoA. This Escherichia coli (strain K12) protein is Peptidyl-lysine N-acetyltransferase YjaB (yjaB).